The chain runs to 188 residues: GTPase KRas (188 aa).

GTP is bound by residues 10 to 18 (GAGGVGKSA), 29 to 35 (VDEYDPT), 59 to 60 (AG), and 116 to 119 (NKCD). The Effector region motif lies at 32-40 (YDPTIEDSY). A disordered region spans residues 168–188 (EKMSKDGKKKKKKTKTKCIIM). Cysteine methyl ester is present on cysteine 185. The S-farnesyl cysteine moiety is linked to residue cysteine 185. Residues 186 to 188 (IIM) constitute a propeptide, removed in mature form.

Belongs to the small GTPase superfamily. Ras family.

It localises to the cell membrane. The protein localises to the cytoplasm. It catalyses the reaction GTP + H2O = GDP + phosphate + H(+). Its activity is regulated as follows. Alternates between an inactive form bound to GDP and an active form bound to GTP. Activated by a guanine nucleotide-exchange factor (GEF) and inactivated by a GTPase-activating protein (GAP). Functionally, ras proteins bind GDP/GTP and possess intrinsic GTPase activity. Plays an important role in the regulation of cell proliferation. May play a role in promoting oncogenic events by inducing transcriptional silencing of tumor suppressor genes (TSGs). The sequence is that of GTPase KRas (KRAS) from Meleagris gallopavo (Wild turkey).